The following is a 416-amino-acid chain: RNA polymerase sigma factor SigA (416 aa).

The sigma-70 factor domain-2 stretch occupies residues methionine 184–threonine 254. The Interaction with polymerase core subunit RpoC signature appears at aspartate 208–glutamine 211. A sigma-70 factor domain-3 region spans residues glutamate 263–glutamate 338. The tract at residues valine 351–histidine 404 is sigma-70 factor domain-4. Residues leucine 377–alanine 396 constitute a DNA-binding region (H-T-H motif).

This sequence belongs to the sigma-70 factor family. RpoD/SigA subfamily. Interacts transiently with the RNA polymerase catalytic core.

The protein localises to the cytoplasm. Sigma factors are initiation factors that promote the attachment of RNA polymerase to specific initiation sites and are then released. This sigma factor is the primary sigma factor during exponential growth. This is RNA polymerase sigma factor SigA from Microcystis aeruginosa.